The following is a 468-amino-acid chain: Argininosuccinate lyase (468 aa).

The protein belongs to the lyase 1 family. Argininosuccinate lyase subfamily.

The protein resides in the cytoplasm. It catalyses the reaction 2-(N(omega)-L-arginino)succinate = fumarate + L-arginine. It functions in the pathway amino-acid biosynthesis; L-arginine biosynthesis; L-arginine from L-ornithine and carbamoyl phosphate: step 3/3. This Paraburkholderia xenovorans (strain LB400) protein is Argininosuccinate lyase.